The primary structure comprises 172 residues: Large ribosomal subunit protein uL10 (172 aa).

The protein belongs to the universal ribosomal protein uL10 family. As to quaternary structure, part of the ribosomal stalk of the 50S ribosomal subunit. The N-terminus interacts with L11 and the large rRNA to form the base of the stalk. The C-terminus forms an elongated spine to which L12 dimers bind in a sequential fashion forming a multimeric L10(L12)X complex.

In terms of biological role, forms part of the ribosomal stalk, playing a central role in the interaction of the ribosome with GTP-bound translation factors. This Brucella suis biovar 1 (strain 1330) protein is Large ribosomal subunit protein uL10.